The sequence spans 291 residues: Phosphate import ATP-binding protein PstB (291 aa).

In terms of domain architecture, ABC transporter spans 45–286 (YSTQNLDLWY…PADKQTEDYI (242 aa)). Residue 77–84 (GPSGCGKS) coordinates ATP.

The protein belongs to the ABC transporter superfamily. Phosphate importer (TC 3.A.1.7) family. In terms of assembly, the complex is composed of two ATP-binding proteins (PstB), two transmembrane proteins (PstC and PstA) and a solute-binding protein (PstS).

The protein resides in the cell membrane. It catalyses the reaction phosphate(out) + ATP + H2O = ADP + 2 phosphate(in) + H(+). In terms of biological role, part of the ABC transporter complex PstSACB involved in phosphate import. Responsible for energy coupling to the transport system. The polypeptide is Phosphate import ATP-binding protein PstB (Staphylococcus epidermidis (strain ATCC 35984 / DSM 28319 / BCRC 17069 / CCUG 31568 / BM 3577 / RP62A)).